The following is a 382-amino-acid chain: MRSEPTNAAGNTTLGVTSVLQSTSVPSSETCHVSYEESRVVLVVVYSAVCLLGLPANCLTAWLTLLQVLQRNVLAVYLFCLSLCELLYISTVPLWIIYIQNQHKWNLGPQACKVTAYIFFCNIYISILLLCCISCDRYMAVVYALESRGHRHQRTAVTISACVILLVGLVNYPVFDMKVEKSFCFEPLRMNSKIAGYHYLRFTFGFAIPLGILAFTNHQIFRSIKLSDSLSAAQKNKVKRSAIAVVTIFLVCFAPYHVVLLVKAASFSFYQGDMDAVCAFESRLYTVSMVFLCLSTVNSVADPIIYVLGTDHSRQEVSRIHTGWKKWSTKTYVTCSKDSEETHLPTELSNTYTFPNPAHPPGSQPAKLGLLCSPERLPEELC.

Residues 1–42 (MRSEPTNAAGNTTLGVTSVLQSTSVPSSETCHVSYEESRVVL) lie on the Extracellular side of the membrane. N-linked (GlcNAc...) asparagine glycosylation is present at N11. Residues 43 to 65 (VVVYSAVCLLGLPANCLTAWLTL) traverse the membrane as a helical segment. At 66–76 (LQVLQRNVLAV) the chain is on the cytoplasmic side. Residues 77–99 (YLFCLSLCELLYISTVPLWIIYI) form a helical membrane-spanning segment. Over 100–113 (QNQHKWNLGPQACK) the chain is Extracellular. C112 and C184 are joined by a disulfide. A helical transmembrane segment spans residues 114–135 (VTAYIFFCNIYISILLLCCISC). Over 136-155 (DRYMAVVYALESRGHRHQRT) the chain is Cytoplasmic. Residues 156 to 175 (AVTISACVILLVGLVNYPVF) traverse the membrane as a helical segment. Topologically, residues 176-198 (DMKVEKSFCFEPLRMNSKIAGYH) are extracellular. A helical membrane pass occupies residues 199–221 (YLRFTFGFAIPLGILAFTNHQIF). The Cytoplasmic portion of the chain corresponds to 222-241 (RSIKLSDSLSAAQKNKVKRS). Residues 242–261 (AIAVVTIFLVCFAPYHVVLL) form a helical membrane-spanning segment. At 262–286 (VKAASFSFYQGDMDAVCAFESRLYT) the chain is on the extracellular side. Residues 287–309 (VSMVFLCLSTVNSVADPIIYVLG) traverse the membrane as a helical segment. Topologically, residues 310-382 (TDHSRQEVSR…SPERLPEELC (73 aa)) are cytoplasmic.

The protein belongs to the G-protein coupled receptor 1 family. As to expression, highly expressed in hematopoietic tissues rich in lymphocytes like spleen and thymus. Weakly expressed in heart and lung. Highly expressed in infiltrating macrophages within atherosclerotic lesions.

The protein localises to the cell membrane. Functionally, may be a receptor for oxidized free fatty acids derived from linoleic and arachidonic acids such as 9-hydroxyoctadecadienoic acid (9-HODE). Activates a G alpha protein, most likely G alpha(q). May be involved in apoptosis. Functions at the G2/M checkpoint to delay mitosis. May function as a sensor that monitors the oxidative states and mediates appropriate cellular responses such as secretion of paracrine signals and attenuation of proliferation. May mediate ths accumulation of intracellular inositol phosphates at acidic pH through proton-sensing activity. The sequence is that of Probable G-protein coupled receptor 132 (Gpr132) from Mus musculus (Mouse).